A 69-amino-acid chain; its full sequence is Large ribosomal subunit protein uL30 (69 aa).

The protein belongs to the universal ribosomal protein uL30 family. In terms of assembly, part of the 50S ribosomal subunit.

The protein is Large ribosomal subunit protein uL30 of Rhizobium etli (strain CIAT 652).